We begin with the raw amino-acid sequence, 437 residues long: Minor fimbrial subunit HifE (437 aa).

The first 30 residues, Met-1–Ala-30, serve as a signal peptide directing secretion.

It belongs to the fimbrial protein family.

The protein localises to the fimbrium. In terms of biological role, may be a minor structural protein required for pilus biogenesis. May be the adhesive component in the pili. This chain is Minor fimbrial subunit HifE (hifE), found in Haemophilus influenzae.